The sequence spans 199 residues: Probable GTP-binding protein EngB (199 aa).

One can recognise an EngB-type G domain in the interval 22–195 (QLPEIALSGR…WEWIEQQCDI (174 aa)). Residues 30–37 (GRSNVGKS), 57–61 (GKTQT), 75–78 (DVPG), 142–145 (TKMD), and 174–176 (FSA) each bind GTP. S37 and T59 together coordinate Mg(2+).

Belongs to the TRAFAC class TrmE-Era-EngA-EngB-Septin-like GTPase superfamily. EngB GTPase family. Requires Mg(2+) as cofactor.

Necessary for normal cell division and for the maintenance of normal septation. In Latilactobacillus sakei subsp. sakei (strain 23K) (Lactobacillus sakei subsp. sakei), this protein is Probable GTP-binding protein EngB.